The sequence spans 490 residues: Cytochrome P450 71A21 (490 aa).

Residues 1-21 (MESMTMIILQSLIIFITILFF) form a helical membrane-spanning segment. Residue C432 coordinates heme.

The protein belongs to the cytochrome P450 family. Heme serves as cofactor.

It localises to the membrane. The protein is Cytochrome P450 71A21 (CYP71A21) of Arabidopsis thaliana (Mouse-ear cress).